A 96-amino-acid polypeptide reads, in one-letter code: DNA-directed RNA polymerase subunit Rpo11 (96 aa).

The protein belongs to the archaeal Rpo11/eukaryotic RPB11/RPC19 RNA polymerase subunit family. Part of the RNA polymerase complex.

The protein localises to the cytoplasm. It carries out the reaction RNA(n) + a ribonucleoside 5'-triphosphate = RNA(n+1) + diphosphate. Its function is as follows. DNA-dependent RNA polymerase (RNAP) catalyzes the transcription of DNA into RNA using the four ribonucleoside triphosphates as substrates. This is DNA-directed RNA polymerase subunit Rpo11 from Nanoarchaeum equitans (strain Kin4-M).